A 203-amino-acid polypeptide reads, in one-letter code: Ribosome maturation factor RimP (203 aa).

Over residues 1–21 the composition is skewed to polar residues; that stretch reads MSDSEATTSTDRSESNSTATI. The disordered stretch occupies residues 1-23; that stretch reads MSDSEATTSTDRSESNSTATIHN.

It belongs to the RimP family.

The protein localises to the cytoplasm. Required for maturation of 30S ribosomal subunits. This chain is Ribosome maturation factor RimP, found in Paenarthrobacter aurescens (strain TC1).